Reading from the N-terminus, the 126-residue chain is MRHRKSGRQLNRNSSHRKAMFSNMASSLVRHEVIKTTVPKAKELRRVIEPLITLAKTDSVANRRLAFARTRDNEVVAKLFNELGPRFAARQGGYTRILKCGFRTGDKAPMAYIELVDRPAAEEAAE.

This sequence belongs to the bacterial ribosomal protein bL17 family. As to quaternary structure, part of the 50S ribosomal subunit. Contacts protein L32.

This Vibrio atlanticus (strain LGP32) (Vibrio splendidus (strain Mel32)) protein is Large ribosomal subunit protein bL17.